Reading from the N-terminus, the 170-residue chain is Adenine phosphoribosyltransferase (170 aa).

The protein belongs to the purine/pyrimidine phosphoribosyltransferase family. As to quaternary structure, homodimer.

It is found in the cytoplasm. It carries out the reaction AMP + diphosphate = 5-phospho-alpha-D-ribose 1-diphosphate + adenine. Its pathway is purine metabolism; AMP biosynthesis via salvage pathway; AMP from adenine: step 1/1. Catalyzes a salvage reaction resulting in the formation of AMP, that is energically less costly than de novo synthesis. This is Adenine phosphoribosyltransferase from Lactococcus lactis subsp. cremoris (strain MG1363).